Consider the following 143-residue polypeptide: Phospholipase A2 isozymes PA3A/PA3B/PA5 (143 aa).

Residues Trp-10, Gly-12, and Gly-14 each coordinate Ca(2+). Intrachain disulfides connect Cys-11/Cys-33, Cys-32/Cys-72, and Cys-39/Cys-65. His-36 is an active-site residue. Asp-37 serves as a coordination point for Ca(2+).

Belongs to the phospholipase A2 family. Group III subfamily. Ca(2+) is required as a cofactor. Expressed by the venom gland.

The protein resides in the secreted. The catalysed reaction is a 1,2-diacyl-sn-glycero-3-phosphocholine + H2O = a 1-acyl-sn-glycero-3-phosphocholine + a fatty acid + H(+). PLA2 catalyzes the calcium-dependent hydrolysis of the 2-acyl groups in 3-sn-phosphoglycerides. This is Phospholipase A2 isozymes PA3A/PA3B/PA5 from Heloderma suspectum (Gila monster).